Here is a 236-residue protein sequence, read N- to C-terminus: 2,3,4,5-tetrahydropyridine-2,6-dicarboxylate N-acetyltransferase (236 aa).

Belongs to the transferase hexapeptide repeat family. DapH subfamily.

The enzyme catalyses (S)-2,3,4,5-tetrahydrodipicolinate + acetyl-CoA + H2O = L-2-acetamido-6-oxoheptanedioate + CoA. Its pathway is amino-acid biosynthesis; L-lysine biosynthesis via DAP pathway; LL-2,6-diaminopimelate from (S)-tetrahydrodipicolinate (acetylase route): step 1/3. Catalyzes the transfer of an acetyl group from acetyl-CoA to tetrahydrodipicolinate. The protein is 2,3,4,5-tetrahydropyridine-2,6-dicarboxylate N-acetyltransferase of Lactobacillus helveticus (strain DPC 4571).